Here is a 113-residue protein sequence, read N- to C-terminus: Integration host factor subunit alpha (113 aa).

A disordered region spans residues 87 to 113 (NALNGEVSDETTEGADDDDDEEGEGDE). Over residues 93-113 (VSDETTEGADDDDDEEGEGDE) the composition is skewed to acidic residues.

Belongs to the bacterial histone-like protein family. Heterodimer of an alpha and a beta chain.

This protein is one of the two subunits of integration host factor, a specific DNA-binding protein that functions in genetic recombination as well as in transcriptional and translational control. The sequence is that of Integration host factor subunit alpha from Anaeromyxobacter dehalogenans (strain 2CP-1 / ATCC BAA-258).